The chain runs to 273 residues: 4-hydroxy-tetrahydrodipicolinate reductase (273 aa).

12 to 17 (GANGRM) is a binding site for NAD(+). R39 contributes to the NADP(+) binding site. NAD(+) contacts are provided by residues 102–104 (GTT) and 126–129 (AANF). The active-site Proton donor/acceptor is the H159. Residue H160 participates in (S)-2,3,4,5-tetrahydrodipicolinate binding. K163 acts as the Proton donor in catalysis. A (S)-2,3,4,5-tetrahydrodipicolinate-binding site is contributed by 169-170 (GT).

The protein belongs to the DapB family. Homotetramer.

Its subcellular location is the cytoplasm. The catalysed reaction is (S)-2,3,4,5-tetrahydrodipicolinate + NAD(+) + H2O = (2S,4S)-4-hydroxy-2,3,4,5-tetrahydrodipicolinate + NADH + H(+). It catalyses the reaction (S)-2,3,4,5-tetrahydrodipicolinate + NADP(+) + H2O = (2S,4S)-4-hydroxy-2,3,4,5-tetrahydrodipicolinate + NADPH + H(+). Its pathway is amino-acid biosynthesis; L-lysine biosynthesis via DAP pathway; (S)-tetrahydrodipicolinate from L-aspartate: step 4/4. Catalyzes the conversion of 4-hydroxy-tetrahydrodipicolinate (HTPA) to tetrahydrodipicolinate. This chain is 4-hydroxy-tetrahydrodipicolinate reductase, found in Cronobacter sakazakii (strain ATCC BAA-894) (Enterobacter sakazakii).